A 353-amino-acid polypeptide reads, in one-letter code: Phospho-N-acetylmuramoyl-pentapeptide-transferase (353 aa).

10 helical membrane-spanning segments follow: residues 16–36, 64–84, 88–108, 130–150, 160–180, 198–218, 228–248, 256–276, 281–301, and 330–350; these read YISVRAGISFFIAFVLTMYLM, AGTPTMGGVVFIFSTIIATVL, LNNFYIVGGILTLALFSLIGI, LIFQFLCAASIAGILFLYGHS, FPLFEMGVFGIVFWMFVIVGS, SILAFSTLSILVYVVGHAVFA, IAGELAIMGSAICGALIAFLW, VFMGDSGSLPLGAFMGYLAIV, ILLLAIGFIFVWETVSVILQV, and KIIVRFWIIAFMSNLIALLSL.

Belongs to the glycosyltransferase 4 family. MraY subfamily. Requires Mg(2+) as cofactor.

It localises to the cell inner membrane. It carries out the reaction UDP-N-acetyl-alpha-D-muramoyl-L-alanyl-gamma-D-glutamyl-meso-2,6-diaminopimeloyl-D-alanyl-D-alanine + di-trans,octa-cis-undecaprenyl phosphate = di-trans,octa-cis-undecaprenyl diphospho-N-acetyl-alpha-D-muramoyl-L-alanyl-D-glutamyl-meso-2,6-diaminopimeloyl-D-alanyl-D-alanine + UMP. The protein operates within cell wall biogenesis; peptidoglycan biosynthesis. Catalyzes the initial step of the lipid cycle reactions in the biosynthesis of the cell wall peptidoglycan: transfers peptidoglycan precursor phospho-MurNAc-pentapeptide from UDP-MurNAc-pentapeptide onto the lipid carrier undecaprenyl phosphate, yielding undecaprenyl-pyrophosphoryl-MurNAc-pentapeptide, known as lipid I. This Aliarcobacter butzleri (strain RM4018) (Arcobacter butzleri) protein is Phospho-N-acetylmuramoyl-pentapeptide-transferase.